The following is a 59-amino-acid chain: Small, acid-soluble spore protein H 2 (59 aa).

It belongs to the SspH family.

The protein localises to the spore core. The sequence is that of Small, acid-soluble spore protein H 2 (sspH2) from Bacillus anthracis.